The primary structure comprises 133 residues: Small ribosomal subunit protein uS8 (133 aa).

The protein belongs to the universal ribosomal protein uS8 family. As to quaternary structure, part of the 30S ribosomal subunit. Contacts proteins S5 and S12.

One of the primary rRNA binding proteins, it binds directly to 16S rRNA central domain where it helps coordinate assembly of the platform of the 30S subunit. The sequence is that of Small ribosomal subunit protein uS8 from Salinibacter ruber (strain DSM 13855 / M31).